The primary structure comprises 434 residues: Eukaryotic translation initiation factor 3 subunit E (434 aa).

The PCI domain maps to 219-392 (FFNHPKGRDL…GHVVMGTQPL (174 aa)).

It belongs to the eIF-3 subunit E family. In terms of assembly, component of the eukaryotic translation initiation factor 3 (eIF-3) complex. The eIF-3 complex interacts with pix. Interacts with mxt.

It localises to the cytoplasm. Its function is as follows. Component of the eukaryotic translation initiation factor 3 (eIF-3) complex, which is involved in protein synthesis of a specialized repertoire of mRNAs and, together with other initiation factors, stimulates binding of mRNA and methionyl-tRNAi to the 40S ribosome. The eIF-3 complex specifically targets and initiates translation of a subset of mRNAs involved in cell proliferation. The protein is Eukaryotic translation initiation factor 3 subunit E (eIF3-S6) of Drosophila grimshawi (Hawaiian fruit fly).